The sequence spans 537 residues: Chaperonin GroEL 2 (537 aa).

ATP is bound by residues 29-32 (TLGP), 86-90 (DGTTT), Gly413, 477-479 (NAA), and Asp493.

The protein belongs to the chaperonin (HSP60) family. Forms a cylinder of 14 subunits composed of two heptameric rings stacked back-to-back. Interacts with the co-chaperonin GroES.

The protein resides in the cytoplasm. The catalysed reaction is ATP + H2O + a folded polypeptide = ADP + phosphate + an unfolded polypeptide.. Its function is as follows. Together with its co-chaperonin GroES, plays an essential role in assisting protein folding. The GroEL-GroES system forms a nano-cage that allows encapsulation of the non-native substrate proteins and provides a physical environment optimized to promote and accelerate protein folding. This chain is Chaperonin GroEL 2, found in Thermobifida fusca (strain YX).